We begin with the raw amino-acid sequence, 75 residues long: UPF0270 protein Pfl01_4103 (75 aa).

Belongs to the UPF0270 family.

In Pseudomonas fluorescens (strain Pf0-1), this protein is UPF0270 protein Pfl01_4103.